The primary structure comprises 424 residues: Trigger factor (424 aa).

The PPIase FKBP-type domain occupies 163–248 (GDTVVLDFEG…IHEIKAKELP (86 aa)).

Belongs to the FKBP-type PPIase family. Tig subfamily.

It localises to the cytoplasm. It catalyses the reaction [protein]-peptidylproline (omega=180) = [protein]-peptidylproline (omega=0). Involved in protein export. Acts as a chaperone by maintaining the newly synthesized protein in an open conformation. Functions as a peptidyl-prolyl cis-trans isomerase. The sequence is that of Trigger factor from Bacillus pumilus (strain SAFR-032).